We begin with the raw amino-acid sequence, 1333 residues long: DNA-directed RNA polymerase subunit beta' (1333 aa).

Residues C60, C62, C75, and C78 each coordinate Zn(2+). 3 residues coordinate Mg(2+): D535, D537, and D539. Zn(2+) contacts are provided by C901, C983, C990, and C993.

This sequence belongs to the RNA polymerase beta' chain family. In terms of assembly, the RNAP catalytic core consists of 2 alpha, 1 beta, 1 beta' and 1 omega subunit. When a sigma factor is associated with the core the holoenzyme is formed, which can initiate transcription. Mg(2+) is required as a cofactor. It depends on Zn(2+) as a cofactor.

The enzyme catalyses RNA(n) + a ribonucleoside 5'-triphosphate = RNA(n+1) + diphosphate. In terms of biological role, DNA-dependent RNA polymerase catalyzes the transcription of DNA into RNA using the four ribonucleoside triphosphates as substrates. This chain is DNA-directed RNA polymerase subunit beta', found in Corynebacterium glutamicum (strain R).